The following is a 273-amino-acid chain: Glutamate racemase (273 aa).

Substrate-binding positions include 9-10 (DS) and 41-42 (YG). Cysteine 73 serves as the catalytic Proton donor/acceptor. A substrate-binding site is contributed by 74–75 (NT). Cysteine 183 acts as the Proton donor/acceptor in catalysis. 184-185 (TH) is a substrate binding site.

It belongs to the aspartate/glutamate racemases family.

The catalysed reaction is L-glutamate = D-glutamate. It participates in cell wall biogenesis; peptidoglycan biosynthesis. Functionally, provides the (R)-glutamate required for cell wall biosynthesis. This is Glutamate racemase from Shewanella oneidensis (strain ATCC 700550 / JCM 31522 / CIP 106686 / LMG 19005 / NCIMB 14063 / MR-1).